The sequence spans 1388 residues: Endoribonuclease Dicer homolog 2 (1388 aa).

One can recognise a Helicase ATP-binding domain in the interval 31 to 210 (ALEKAIKQNT…DSYWKKIHEL (180 aa)). 44–51 (LETGSGKT) is a binding site for ATP. The DECH box motif lies at 152-155 (DECH). The region spanning 380–544 (LGYSSLENIR…PLPDDSDEPL (165 aa)) is the Helicase C-terminal domain. Residues 559–645 (SVSLIYHYCS…VPDMVVAETV (87 aa)) enclose the Dicer dsRNA-binding fold domain. The 131-residue stretch at 805 to 935 (TSHEVLEKHE…LPPELCHVIL (131 aa)) folds into the PAZ domain. 2 consecutive RNase III domains span residues 962–1113 (AYNL…SEGG) and 1149–1296 (VGYM…VDSG). The Mg(2+) site is built by Glu1188, Asp1282, and Glu1285. Positions 1315-1384 (TPETVKLHPV…YKEVLNLLKN (70 aa)) constitute a DRBM domain.

Belongs to the helicase family. Dicer subfamily. It depends on Mg(2+) as a cofactor. Requires Mn(2+) as cofactor.

The protein localises to the nucleus. It is found in the cytoplasm. Its function is as follows. Ribonuclease (RNase) III involved in RNA-mediated post-transcriptional gene silencing (PTGS). Involved in the processing of natural small interfering RNAs (nat-siRNAs, derived from cis-natural antisense transcripts) by cleaving small dsRNAs into 24 nucleotide nat-siRNAs. Plays an essential role in transitive silencing of transgenes by processing secondary siRNAs. This pathway, which requires DCL4 and RDR6, amplifies silencing by using the target RNA as substrate to generate secondary siRNAs, providing an efficient mechanism for long-distance silencing. May participate with DCL3 in the production of 24 nucleotide repeat-associated siRNAs (ra-siRNAs) which derive from heterochromatin and DNA repeats such as transposons. Plays a role in antiviral RNA silencing. Involved in the production of viral siRNAs derived from the turnip crinkle virus (TCV) and tobacco rattle virus (TRV). Targeted by the viral silencing suppressor (VSR) protein 2b of the cucumber mosaic virus (CMV) that inactivates DCL2 function in RNA silencing. Does not seem to be involved in microRNAs (miRNAs) processing. The sequence is that of Endoribonuclease Dicer homolog 2 from Arabidopsis thaliana (Mouse-ear cress).